The sequence spans 446 residues: Bifunctional protein GlmU (446 aa).

A pyrophosphorylase region spans residues 1-225 (MEGIILAAGK…ETEVYGVNDR (225 aa)). UDP-N-acetyl-alpha-D-glucosamine-binding positions include 6–9 (LAAG), Lys20, Gln70, and 75–76 (GT). Asp98 serves as a coordination point for Mg(2+). UDP-N-acetyl-alpha-D-glucosamine is bound by residues Gly135, Glu150, Asn165, and Asn223. Asn223 lines the Mg(2+) pocket. Positions 226-246 (VQLARLTKGVYRRKAEALMQE) are linker. Residues 247-446 (GVTIIDPETV…RQVNKEDYVK (200 aa)) are N-acetyltransferase. Residues Arg328 and Lys346 each coordinate UDP-N-acetyl-alpha-D-glucosamine. His358 acts as the Proton acceptor in catalysis. Residues Tyr361 and Asn372 each coordinate UDP-N-acetyl-alpha-D-glucosamine. Residues Ala375, 381 to 382 (NY), Ser400, Ala418, and Arg435 contribute to the acetyl-CoA site.

It in the N-terminal section; belongs to the N-acetylglucosamine-1-phosphate uridyltransferase family. This sequence in the C-terminal section; belongs to the transferase hexapeptide repeat family. In terms of assembly, homotrimer. The cofactor is Mg(2+).

Its subcellular location is the cytoplasm. It catalyses the reaction alpha-D-glucosamine 1-phosphate + acetyl-CoA = N-acetyl-alpha-D-glucosamine 1-phosphate + CoA + H(+). The enzyme catalyses N-acetyl-alpha-D-glucosamine 1-phosphate + UTP + H(+) = UDP-N-acetyl-alpha-D-glucosamine + diphosphate. The protein operates within nucleotide-sugar biosynthesis; UDP-N-acetyl-alpha-D-glucosamine biosynthesis; N-acetyl-alpha-D-glucosamine 1-phosphate from alpha-D-glucosamine 6-phosphate (route II): step 2/2. It functions in the pathway nucleotide-sugar biosynthesis; UDP-N-acetyl-alpha-D-glucosamine biosynthesis; UDP-N-acetyl-alpha-D-glucosamine from N-acetyl-alpha-D-glucosamine 1-phosphate: step 1/1. Its pathway is bacterial outer membrane biogenesis; LPS lipid A biosynthesis. In terms of biological role, catalyzes the last two sequential reactions in the de novo biosynthetic pathway for UDP-N-acetylglucosamine (UDP-GlcNAc). The C-terminal domain catalyzes the transfer of acetyl group from acetyl coenzyme A to glucosamine-1-phosphate (GlcN-1-P) to produce N-acetylglucosamine-1-phosphate (GlcNAc-1-P), which is converted into UDP-GlcNAc by the transfer of uridine 5-monophosphate (from uridine 5-triphosphate), a reaction catalyzed by the N-terminal domain. This Carboxydothermus hydrogenoformans (strain ATCC BAA-161 / DSM 6008 / Z-2901) protein is Bifunctional protein GlmU.